Reading from the N-terminus, the 79-residue chain is Moronecidin (79 aa).

A signal peptide spans 1–22; sequence MKCATLFLVLSMVVLMAEPGDA. Residue G44 is modified to Glycine amide. The tract at residues 45 to 79 is disordered; sequence GKAEQDQQDQQYQQEQQEQQAQQYQRFNRERAAFD. Positions 47–79 are excised as a propeptide; the sequence is AEQDQQDQQYQQEQQEQQAQQYQRFNRERAAFD. Positions 52 to 69 are enriched in low complexity; the sequence is QDQQYQQEQQEQQAQQYQ.

In terms of tissue distribution, expressed in mast cells in gill, skin and gut, and in lining blood vessels in the viscera. Also in intestine, spleen, anterior kidney, and blood cells.

The protein resides in the secreted. In terms of biological role, antimicrobial peptide with broad-spectrum activity against Gram-positive and Gram-negative bacteria as well as against a variety of fungi. Rapidly inactivates channel catfish herpesvirus (ED(50)=4 uM) and frog virus 3 (ED(50)=13 uM) over a wide temperature range. Seems to disrupt the membranes by adopting an alpha helical conformation and forming toroidal pores. Has hemolytic activity. This chain is Moronecidin, found in Morone saxatilis (Striped bass).